An 883-amino-acid chain; its full sequence is MQSYIAVNIDMASLKMLICVCVAILIPSTLSQDSHGIAGIIDPRDTASMDVGKISFSEAIGSGAPKEPQIRNRIFACSSPTGASVARLAQPRHCHRHADSTNMTEGIAVVFKQNIAPYVFNVTLYYKHITTVTTWALFSRPQITNEYVTRVPIDYHEIVRIDRSGECSSKATYHKNFMFFEAYDNDEAEKKLPLVPSLLRSTVSKAFHTTNFTKRHQTLGYRTSTSVDCVVEYLQARSVYPYDYFGMATGDTVEISPFYTKNTTGPRRHSVYRDYRFLEIANYQVRDLETGQIRPPKKRNFLTDEQFTIGWDAMEEKESVCTLSKWIEVPEAVRVSYKNSYHFSLKDMTMTFSSGKQPFNISRLHLAECVPTIASEAIDGIFARKYSSTHVRSGDIEYYLGSGGFLIAFQKLMSHGLAEMYLEEAQRQNHLPRGRERRQAAGRRTASLQSGPQGDRITTHSSATFAMLQFAYDKIQAHVNELIGNLLEAWCELQNRQLIVWHEMKKLNPNSLMTSLFGQPVSARLLGDIVAVSKCIEIPIENIRMQDSMRMPGDPTMCYTRPVLIFRYSSSPESQFSANSTENHNLDILGQLGEHNEILQGRNLIEPCMINHRRYFLLGENYLLYEDYTFVRQVNASEIEEVSIFINLNATILEDLDFVPVEVYTREELRDTGTLNYDDVVRYQNIYNKRFRDIDTVIRGDRGDAIFRAIADFFGNTLGEVGKALGTVVMTAAAAVISTVSGIASFLSNPFAALGIGIAVVVSIILGLLAFKYVMNLKSNPVQVLFPGAVPPAGTPPRPSRRYYKDEEEVEEDSDEDDRILATRVLKGLELLHKDEQKARRQKARFSAFAKNMRNLFRRKPRTKEDDYPLLEYPSWAEESEDE.

A signal peptide spans Met1–Ser31. Over Gln32 to Pro750 the chain is Virion surface. 5 disulfides stabilise this stretch: Cys77-Cys535, Cys94-Cys491, Cys167-Cys229, Cys321-Cys369, and Cys558-Cys608. Asn102 and Asn121 each carry an N-linked (GlcNAc...) asparagine; by host glycan. The involved in fusion and/or binding to host membrane stretch occupies residues Thr134–Arg140. Residue Asn211 is glycosylated (N-linked (GlcNAc...) asparagine; by host). An involved in fusion and/or binding to host membrane region spans residues His216–Thr223. N-linked (GlcNAc...) asparagine; by host glycans are attached at residues Asn262 and Asn360. The segment at Gln428–Ile457 is disordered. N-linked (GlcNAc...) asparagine; by host glycans are attached at residues Asn579, Asn635, and Asn649. Hydrophobic membrane proximal region stretches follow at residues Ile694–Ser748 and Ala724–Ala744. The helical transmembrane segment at Phe751–Phe771 threads the bilayer. Topologically, residues Lys772–Glu883 are intravirion. The tract at residues Pro791–Asp817 is disordered. Positions Asp806–Asp817 are enriched in acidic residues. Residues Tyr868 to Leu871 carry the Internalization motif motif.

Belongs to the herpesviridae glycoprotein B family. In terms of assembly, homotrimer; disulfide-linked. Binds to heparan sulfate proteoglycans. Interacts with gH/gL heterodimer. Post-translationally, a proteolytic cleavage by host furin generates two subunits that remain linked by disulfide bonds.

It localises to the virion membrane. It is found in the host cell membrane. The protein resides in the host endosome membrane. The protein localises to the host Golgi apparatus membrane. Functionally, envelope glycoprotein that forms spikes at the surface of virion envelope. Essential for the initial attachment to heparan sulfate moieties of the host cell surface proteoglycans. Involved in fusion of viral and cellular membranes leading to virus entry into the host cell. Following initial binding to its host receptors, membrane fusion is mediated by the fusion machinery composed at least of gB and the heterodimer gH/gL. May be involved in the fusion between the virion envelope and the outer nuclear membrane during virion egress. This chain is Envelope glycoprotein B, found in Gallus gallus (Chicken).